The primary structure comprises 333 residues: C4-dicarboxylate-binding periplasmic protein DctP (333 aa).

The first 26 residues, 1–26, serve as a signal peptide directing secretion; it reads MLTRRILGALVGATALSLALSVPALA.

It belongs to the bacterial solute-binding protein 7 family. The complex comprises the extracytoplasmic solute receptor protein DctP, and the two transmembrane proteins DctQ and DctM.

It localises to the periplasm. Functionally, part of the tripartite ATP-independent periplasmic (TRAP) transport system DctPQM involved in C4-dicarboxylates uptake. Binds C4-dicarboxylates such as fumarate, succinate, L-malate and D-malate. This is C4-dicarboxylate-binding periplasmic protein DctP from Rhodobacter capsulatus (Rhodopseudomonas capsulata).